A 95-amino-acid polypeptide reads, in one-letter code: Co-chaperonin GroES (95 aa).

It belongs to the GroES chaperonin family. As to quaternary structure, heptamer of 7 subunits arranged in a ring. Interacts with the chaperonin GroEL.

The protein localises to the cytoplasm. Its function is as follows. Together with the chaperonin GroEL, plays an essential role in assisting protein folding. The GroEL-GroES system forms a nano-cage that allows encapsulation of the non-native substrate proteins and provides a physical environment optimized to promote and accelerate protein folding. GroES binds to the apical surface of the GroEL ring, thereby capping the opening of the GroEL channel. This chain is Co-chaperonin GroES, found in Ruthia magnifica subsp. Calyptogena magnifica.